We begin with the raw amino-acid sequence, 97 residues long: Putative septation protein SpoVG (97 aa).

It belongs to the SpoVG family.

Functionally, essential for sporulation. Interferes with or is a negative regulator of the pathway leading to asymmetric septation. This Bacillus cereus (strain 03BB102) protein is Putative septation protein SpoVG.